A 106-amino-acid polypeptide reads, in one-letter code: Small cardioactive peptide-related peptide (106 aa).

Residues 1 to 20 (MFCKHLSFVAITICFLLVLA) form the signal peptide. Residues 21 to 41 (KTENEIQQKNIKFDQRTWRNM) constitute a propeptide, amino-terminal spacer peptide. Q52 is modified (glutamine amide). Positions 55–106 (SDNQPDYTCCGMPLTKYVGICPIGMECCPGLKKVLQKSGQRTIYSVCVADAY) are cleaved as a propeptide — carboxy-terminal spacer peptide.

As to expression, expression is seen in the peripheral and central nervous systems in tissues such as the brain, the inferior buccal ganglion, the gastric ganglion, the olfactory lobe, the peduncle lobe and the optic lobe. Expression in the brain is distributed in the median inferior frontal lobe, the superior buccal lobe, the prebranchial lobe and the pedal lobe. Not expressed in the vasomotor lobe or the palliovisceral lobe that controls the cardiac system.

The protein resides in the secreted. In terms of biological role, evokes contractions in the radula protractor muscle, and may regulate feeding behavior and gut motility by controlling muscle contraction of the buccal mass. The chain is Small cardioactive peptide-related peptide from Octopus vulgaris (Common octopus).